A 420-amino-acid polypeptide reads, in one-letter code: tRNA(Ile)-lysidine synthase (420 aa).

28 to 33 (SGGLDS) is an ATP binding site.

It belongs to the tRNA(Ile)-lysidine synthase family.

Its subcellular location is the cytoplasm. It carries out the reaction cytidine(34) in tRNA(Ile2) + L-lysine + ATP = lysidine(34) in tRNA(Ile2) + AMP + diphosphate + H(+). Functionally, ligates lysine onto the cytidine present at position 34 of the AUA codon-specific tRNA(Ile) that contains the anticodon CAU, in an ATP-dependent manner. Cytidine is converted to lysidine, thus changing the amino acid specificity of the tRNA from methionine to isoleucine. The chain is tRNA(Ile)-lysidine synthase from Hydrogenovibrio crunogenus (strain DSM 25203 / XCL-2) (Thiomicrospira crunogena).